Consider the following 220-residue polypeptide: Octanoyltransferase (220 aa).

Positions 36 to 212 (ADSPDQFWLV…CLARQLGRRL (177 aa)) constitute a BPL/LPL catalytic domain. Substrate contacts are provided by residues 75-82 (RGGQVTYH), 142-144 (SLG), and 155-157 (GVA). C173 functions as the Acyl-thioester intermediate in the catalytic mechanism.

This sequence belongs to the LipB family.

It localises to the cytoplasm. It carries out the reaction octanoyl-[ACP] + L-lysyl-[protein] = N(6)-octanoyl-L-lysyl-[protein] + holo-[ACP] + H(+). The protein operates within protein modification; protein lipoylation via endogenous pathway; protein N(6)-(lipoyl)lysine from octanoyl-[acyl-carrier-protein]: step 1/2. In terms of biological role, catalyzes the transfer of endogenously produced octanoic acid from octanoyl-acyl-carrier-protein onto the lipoyl domains of lipoate-dependent enzymes. Lipoyl-ACP can also act as a substrate although octanoyl-ACP is likely to be the physiological substrate. The sequence is that of Octanoyltransferase from Chromohalobacter salexigens (strain ATCC BAA-138 / DSM 3043 / CIP 106854 / NCIMB 13768 / 1H11).